Consider the following 219-residue polypeptide: Probable nicotinate-nucleotide adenylyltransferase (219 aa).

The protein belongs to the NadD family.

The catalysed reaction is nicotinate beta-D-ribonucleotide + ATP + H(+) = deamido-NAD(+) + diphosphate. Its pathway is cofactor biosynthesis; NAD(+) biosynthesis; deamido-NAD(+) from nicotinate D-ribonucleotide: step 1/1. Its function is as follows. Catalyzes the reversible adenylation of nicotinate mononucleotide (NaMN) to nicotinic acid adenine dinucleotide (NaAD). This Pseudomonas entomophila (strain L48) protein is Probable nicotinate-nucleotide adenylyltransferase.